The following is a 362-amino-acid chain: Formyltransferase/hydrolase complex Fhc subunit B (362 aa).

In terms of assembly, octaheteromer. Part of the formyltransferase/hydrolase complex fhc; composed of FhcA, FhcB, FhcC and FhcD.

It is found in the cytoplasm. The protein operates within one-carbon metabolism; formaldehyde degradation; formate from formaldehyde (H(4)MPT route): step 4/5. Involved in the transformation of 5-formyl tetrahydromethanopterin (5-formyl-H(4)MPT) to methanofuran (MFR) and formate via the formylmethanofuran (formyl-MFR). The sequence is that of Formyltransferase/hydrolase complex Fhc subunit B (fhcB) from Methylorubrum extorquens (strain ATCC 14718 / DSM 1338 / JCM 2805 / NCIMB 9133 / AM1) (Methylobacterium extorquens).